The primary structure comprises 692 residues: Ino eighty subunit 1 (692 aa).

A compositionally biased stretch (basic and acidic residues) spans 1 to 25; it reads MGKRVYDPIHDTFQLREDNSDETKA. Positions 1–133 are disordered; that stretch reads MGKRVYDPIH…RHLKKPDGEP (133 aa). At serine 27 the chain carries Phosphoserine. Positions 28-56 are enriched in polar residues; sequence PMQSVKSGSQEEASPSSIQSETETVTTKS. The segment covering 64 to 80 has biased composition (acidic residues); the sequence is EIDDKNDDDSTQSEEEN. Positions 97 to 109 are enriched in polar residues; the sequence is GASTATGPVTTNT. Residues 340–385 adopt a coiled-coil conformation; it reads SKYVEVESKAQEQDMVDEQNEVKETEAENEKQESKAAYATTLFDIL. A compositionally biased stretch (basic and acidic residues) spans 465–485; the sequence is FMSKMEEGRKRERTNVTEVKK. Positions 465–550 are disordered; that stretch reads FMSKMEEGRK…VTPAAPTETE (86 aa). Serine 487, serine 493, and serine 504 each carry phosphoserine. Acidic residues predominate over residues 493 to 504; sequence SEEDGEGEDDKS. Threonine 507 is subject to Phosphothreonine. A compositionally biased stretch (polar residues) spans 513 to 528; that stretch reads SLLTPTPILESSSPMT.

In terms of assembly, component of the chromatin-remodeling INO80 complex, at least composed of ARP4, ARP5, ARP8, RVB1, RVB2, TAF14, NHP10, IES1, IES3, IES4, IES6, ACT1, IES2, IES5 and INO80.

The protein localises to the nucleus. Probably involved in transcription regulation via its interaction with the INO80 complex, a chromatin-remodeling complex. The sequence is that of Ino eighty subunit 1 (IES1) from Saccharomyces cerevisiae (strain ATCC 204508 / S288c) (Baker's yeast).